The primary structure comprises 1426 residues: MVAPVLKSFQAEVVALSKRSREAEAAFLSVYKQLIEAPDPVPSFEVARTLDDRLQRPSFDPSGQRLQDVHIAWKRCPEPPSAREQNEGTCPTGHTPANGNHLPGPEDTLVTDTLLQKNEAERQKGLQEVHITLAARLGEAEEKIKVLHSALKATQTELLELRRKYDEEAASKADEVGLIMTNLEKANQRAEAAQREVESLREQLASVNSSIRLACCSPQGPSGEKVSFALCSGPRLEAALASKDREILRLLKDAQQLRHSLQELEEVSANQIADLERQLAAKSEAIEKLQEKLEAQADYEEIKTELSILRAMKLASSTCSLPQTLAKPDDPLLVAKDVFFPTQKFLLEKPALLASPEEDPSEDDSIKGSLGTEPPYPPQLPPPPGPEDPLSPSPAQPLLGPSLGPDGPRTFSLSPFPSLAPGERLAGDSLLSKHMMGPAAFKGETGNLLAFPPTFYGGAKPPSAPAASVPCPEPTGAPEAVDGAGPEEEQLDTAEIAFQVKEQLLKHNIGQRVFGHYVLGLSQGSVSEILARPKPWRKLTVKGKEPFIKMKQFLSDEQNVLALRTIQVRQRGSITPRIRTPETGSDDAIKSILEQAKKEIESQKGGESKNSPASVSIPNGTASSSTSEDAIKNILEQARREMQAQQQALLEMESGPRGRSVPPSPPERPSPATASQNGALTCVKQEDGGGGSGSSSTVQAPLAVLSPAAFVQRIIRKVKSEIGDAGYFDHHWASDRGLLSRPYASVSPSLSSSSSYSGQPNGRAWPRGDEATIAPEDEAAMGEDEAPRVGELKAEAGAPEVGGGRLPYYPAYVPRTLKPTVPPLTPEQYELYMYREVDTLELTRQVKEKLAKNGICQRIFGEKVLGLSQGSVSDMLSRPKPWSKLTQKGREPFIRMQLWLSDQLGQGQGQAPTQQPSASQASPTEPTSSPSPPPSPTEPEKTSQEPLGLSLESSKENQQPEGRASSSLGGKPFSSSQAAGGIQEMVAMSPELDTYSITKRVKEVLTDNNLGQRLFGESILGLTQGSVSDLLSRPKPWHKLSLKGREPFVRMQLWLSDPHNVEKLRDMKKLEKKAYLKRRYGLIGTGSDSESPAAHSECPSPCLQPQELSLMQAKKPRVVLAPAEKEALRKAYQLEPYPSQQTIELLSFQLNLKTNTVINWFHNYRSRMRREMLVEGTQDDPDFDPSGGPNVLTPGHTHREPTPQSPDSETEDQKPPMKSLELQEPEGPLQRAAPDRALVKIKQEEGLEVDGDSQPQDVGDPDRGQDGPKEEHTHPLGNSDLSELAPGPFLSGTPNPDCPSLHNPQEKGTGEQVHSEPLSFKSTSESSCCSLEGPPNSPSVISSPDLTTCVSPAPSSSAPISPSLPGAPPAKVPSTSPTGDTAAALHPSTKVNPNLQRRHEKMANLNSIIYRLERAANREEVLEWEF.

The disordered stretch occupies residues 77–104 (PEPPSAREQNEGTCPTGHTPANGNHLPG). Serine 81 carries the post-translational modification Phosphoserine. Residues 131–311 (ITLAARLGEA…IKTELSILRA (181 aa)) adopt a coiled-coil conformation. 6 disordered regions span residues 351–419 (ALLA…FPSL), 460–488 (KPPSAPAASVPCPEPTGAPEAVDGAGPEE), 599–628 (EIESQKGGESKNSPASVSIPNGTASSSTSE), 653–676 (ESGPRGRSVPPSPPERPSPATASQ), 743–769 (YASVSPSLSSSSSYSGQPNGRAWPRGD), and 904–977 (LGQG…SSSQ). Positions 374–395 (PPYPPQLPPPPGPEDPLSPSPA) are enriched in pro residues. Composition is skewed to low complexity over residues 397 to 408 (PLLGPSLGPDGP) and 460 to 470 (KPPSAPAASVP). Positions 482 to 569 (DGAGPEEEQL…VLALRTIQVR (88 aa)) form a DNA-binding region, CUT 1. Positions 587–655 (DAIKSILEQA…QQALLEMESG (69 aa)) form a coiled coil. Over residues 608 to 628 (SKNSPASVSIPNGTASSSTSE) the composition is skewed to polar residues. Low complexity-rich tracts occupy residues 743–757 (YASVSPSLSSSSSYS), 910–928 (QAPTQQPSASQASPTEPTS), and 965–976 (SSSLGGKPFSSS). The segment at residues 828 to 915 (QYELYMYREV…QGQGQAPTQQ (88 aa)) is a DNA-binding region (CUT 2). Residues 983 to 1070 (QEMVAMSPEL…VEKLRDMKKL (88 aa)) constitute a DNA-binding region (CUT 3). The segment at residues 1113–1172 (AKKPRVVLAPAEKEALRKAYQLEPYPSQQTIELLSFQLNLKTNTVINWFHNYRSRMRREM) is a DNA-binding region (homeobox). The interval 1177 to 1392 (TQDDPDFDPS…AALHPSTKVN (216 aa)) is disordered. Basic and acidic residues-rich tracts occupy residues 1233–1245 (APDRALVKIKQEE) and 1260–1274 (DPDRGQDGPKEEHTH). Over residues 1318–1332 (LSFKSTSESSCCSLE) the composition is skewed to low complexity. Residues 1338–1350 (PSVISSPDLTTCV) are compositionally biased toward polar residues. Low complexity predominate over residues 1351 to 1364 (SPAPSSSAPISPSL).

It belongs to the CUT homeobox family. As to expression, restricted to neural tissues. Expressed exclusively in the central and peripheral nervous systems.

The protein localises to the nucleus. Transcription factor involved in the control of neuronal proliferation and differentiation in the brain. Regulates dendrite development and branching, dendritic spine formation, and synaptogenesis in cortical layers II-III. Binds to DNA in a sequence-specific manner. This Mus musculus (Mouse) protein is Homeobox protein cut-like 2 (Cux2).